An 880-amino-acid chain; its full sequence is Probable dipeptidyl-aminopeptidase B (880 aa).

Residues 1-26 (MPRQRAPKEEEAELLTKQERSARSSE) are compositionally biased toward basic and acidic residues. The tract at residues 1-71 (MPRQRAPKEE…KYTDEDDEAQ (71 aa)) is disordered. Residues 1–93 (MPRQRAPKEE…PISVDKKTRR (93 aa)) are Cytoplasmic-facing. Residues 30–40 (DTSISSISTTS) show a composition bias toward low complexity. Residues 94–114 (WLWIVGIACVTGWALALVFFL) form a helical; Signal-anchor for type II membrane protein membrane-spanning segment. At 115–880 (MSGSYKHVST…AQVDARMERR (766 aa)) the chain is on the vacuolar side. N-linked (GlcNAc...) asparagine glycosylation occurs at Asn-533. The Charge relay system role is filled by Ser-724. N-linked (GlcNAc...) asparagine glycosylation is present at Asn-778. Catalysis depends on charge relay system residues Asp-801 and His-834.

The protein belongs to the peptidase S9B family.

The protein localises to the vacuole membrane. It carries out the reaction Release of an N-terminal dipeptide, Xaa-Yaa-|-Zaa-, from a polypeptide, preferentially when Yaa is Pro, provided Zaa is neither Pro nor hydroxyproline.. Functionally, type IV dipeptidyl-peptidase which removes N-terminal dipeptides sequentially from polypeptides having unsubstituted N-termini provided that the penultimate residue is proline. The polypeptide is Probable dipeptidyl-aminopeptidase B (dapB) (Pyrenophora tritici-repentis (strain Pt-1C-BFP) (Wheat tan spot fungus)).